The following is a 120-amino-acid chain: U13-barytoxin-Tl1a (120 aa).

The signal sequence occupies residues 1–20; the sequence is MKTIIVFLSLLVLATKFGDA. 3 cysteine pairs are disulfide-bonded: cysteine 75-cysteine 90, cysteine 82-cysteine 95, and cysteine 89-cysteine 109.

This sequence belongs to the neurotoxin 14 (magi-1) family. 05 (ICK-7) subfamily. ICK-7 sub-subfamily. Expressed by the venom gland.

Its subcellular location is the secreted. Functionally, ion channel inhibitor. This is U13-barytoxin-Tl1a from Trittame loki (Brush-footed trapdoor spider).